The following is a 347-amino-acid chain: Histidinol-phosphate aminotransferase (347 aa).

Lysine 209 carries the post-translational modification N6-(pyridoxal phosphate)lysine.

The protein belongs to the class-II pyridoxal-phosphate-dependent aminotransferase family. Histidinol-phosphate aminotransferase subfamily. Homodimer. Requires pyridoxal 5'-phosphate as cofactor.

The enzyme catalyses L-histidinol phosphate + 2-oxoglutarate = 3-(imidazol-4-yl)-2-oxopropyl phosphate + L-glutamate. It participates in amino-acid biosynthesis; L-histidine biosynthesis; L-histidine from 5-phospho-alpha-D-ribose 1-diphosphate: step 7/9. The polypeptide is Histidinol-phosphate aminotransferase (Geotalea uraniireducens (strain Rf4) (Geobacter uraniireducens)).